Reading from the N-terminus, the 352-residue chain is C-C chemokine receptor type 5 (352 aa).

The Extracellular portion of the chain corresponds to 1 to 30; sequence MDYQVSSPTYDIDYYTSEPCQKINVKQIAA. Position 3 is a sulfotyrosine (Tyr-3). Ser-6 and Ser-7 each carry an O-linked (GalNAc...) serine glycan. A sulfotyrosine mark is found at Tyr-10, Tyr-14, and Tyr-15. Cystine bridges form between Cys-20–Cys-269 and Cys-101–Cys-178. The chain crosses the membrane as a helical span at residues 31-58; that stretch reads RLLPPLYSLVFIFGFVGNILVVLILINC. The Cytoplasmic segment spans residues 59–68; sequence KRLKSMTDIY. Residues 69–89 traverse the membrane as a helical segment; sequence LLNLAISDLLFLLTIPFWAHY. Residues 90-102 are Extracellular-facing; it reads AAAQWDFGNTMCQ. The helical transmembrane segment at 103-124 threads the bilayer; sequence LLTGLYLIGFFSGIFFIILLTI. Over 125–141 the chain is Cytoplasmic; sequence DRYLAIVHAVFALKART. Residues 142–166 form a helical membrane-spanning segment; that stretch reads VTFGLVTSVITWVVAVFASLPGIIF. The Extracellular segment spans residues 167–198; the sequence is TRSQREGLHYTCSSHFPSSQYQFWKNFQTLKI. The helical transmembrane segment at 199–218 threads the bilayer; the sequence is VILGLVLPLLVMVICYSGIL. Topologically, residues 219–235 are cytoplasmic; the sequence is KTLLRCRNEKKRHRAVR. The chain crosses the membrane as a helical span at residues 236 to 260; it reads LIFTIMIVYFLFWAPYNIVLLLNTF. At 261–277 the chain is on the extracellular side; that stretch reads QEFFGLNNCSSSNRLDQ. The helical transmembrane segment at 278–301 threads the bilayer; the sequence is AMQVTETLGMTHCCINPIIYAFVG. Topologically, residues 302-352 are cytoplasmic; the sequence is EKFRNYLLVFFQKHLAKRFCKCCSIFQQEAPERASSVYTRSTGEQETTVGL. S-palmitoyl cysteine attachment occurs at residues Cys-321, Cys-323, and Cys-324. Phosphoserine; by BARK1 is present on residues Ser-336, Ser-337, and Ser-342.

This sequence belongs to the G-protein coupled receptor 1 family. In terms of assembly, interacts with PRAF2. Efficient ligand binding to CCL3/MIP-1alpha and CCL4/MIP-1beta requires sulfation, O-glycosylation and sialic acid modifications. Glycosylation on Ser-6 is required for efficient binding of CCL4. Interacts with GRK2. Interacts with ARRB1 and ARRB2. Interacts with CNIH4. Interacts with S100A4; this interaction stimulates T-lymphocyte chemotaxis. Post-translationally, sulfated on at least 2 of the N-terminal tyrosines. Sulfation is required for efficient binding of the chemokines, CCL3 and CCL4. Palmitoylation in the C-terminal is important for cell surface expression. In terms of processing, phosphorylation on serine residues in the C-terminal is stimulated by binding CC chemokines especially by APO-RANTES. Post-translationally, O-glycosylated, but not N-glycosylated. Ser-6 appears to be the major site even if Ser-7 may be also O-glycosylated. Also sialylated glycans present which contribute to chemokine binding. Thr-16 and Ser-17 may also be glycosylated and, if so, with small moieties such as a T-antigen.

It is found in the cell membrane. Functionally, receptor for a number of inflammatory CC-chemokines including CCL3/MIP-1-alpha, CCL4/MIP-1-beta and RANTES and subsequently transduces a signal by increasing the intracellular calcium ion level. May play a role in the control of granulocytic lineage proliferation or differentiation. Participates in T-lymphocyte migration to the infection site by acting as a chemotactic receptor. This chain is C-C chemokine receptor type 5 (CCR5), found in Allochrocebus lhoesti (L'Hoest's monkey).